We begin with the raw amino-acid sequence, 781 residues long: Mitogen-activated protein kinase 7 (781 aa).

Residues 1 to 27 form a disordered region; it reads MAEPLKEDDGEDGSGEPPGPVKAEPAG. N-acetylalanine is present on Ala-2. The interval 2-77 is required for cytoplasmic targeting; it reads AEPLKEDDGE…VVSSARRRLT (76 aa). The 293-residue stretch at 55 to 347 folds into the Protein kinase domain; the sequence is YEIIETIGNG…AAAALRHPFL (293 aa). Residues 61–69 and Lys-84 contribute to the ATP site; that span reads IGNGAYGVV. A required for binding to MAP2K5 region spans residues 78-139; the sequence is GQQVAIKKIP…FKSVYVVLDL (62 aa). The interval 140–406 is necessary for oligomerization; that stretch reads MESDLHQIIH…QQIRFQPSLQ (267 aa). The Proton acceptor role is filled by Asp-182. The TXY motif lies at 219–221; that stretch reads TEY. Residues 402–708 are disordered; that stretch reads QPSLQPVASE…PKGSGAGYGV (307 aa). The interval 407–781 is may not be required for kinase activity; required to stimulate MEF2C activity; that stretch reads PVASEPGCPD…LADLPDLQEP (375 aa). Pro residues-rich tracts occupy residues 433–445 and 454–463; these read SPPP…PGPA and QPPPPASEPA. Residues 476 to 486 are compositionally biased toward low complexity; sequence KAALKAALLKS. Composition is skewed to basic and acidic residues over residues 502-519, 527-544, and 563-573; these read PEPR…EREE, RAKE…KERG, and DNDRSLLERWT. The Nuclear localization signal motif lies at 505–539; sequence RKPVTAQERQREREEKRRRRQERAKEREKRRQERE. Composition is skewed to pro residues over residues 578 to 594 and 601 to 614; these read PPAP…PPAG and GPLP…PAPA. 2 stretches are compositionally biased toward low complexity: residues 615 to 632 and 642 to 652; these read AGPA…LAPQ and GPSALSVLPYF. The span at 653–664 shows a compositional bias: pro residues; the sequence is PSGPPPPDPGGA. Residues 668 to 685 show a composition bias toward polar residues; that stretch reads STSESPDVTLVTQQLSKS. Residue Ser-685 is modified to Phosphoserine. Thr-698 bears the Phosphothreonine mark.

The protein belongs to the protein kinase superfamily. CMGC Ser/Thr protein kinase family. MAP kinase subfamily. As to quaternary structure, interacts with MAP2K5. Forms oligomers. Interacts with MEF2A, MEF2C and MEF2D; the interaction phosphorylates the MEF2s and enhances transcriptional activity of MEF2A, MEF2C but not MEF2D. Interacts with SGK1. Interacts with PML. Interacts (via N-terminal half) with HSP90AB1-CDC37 chaperone complex in resting cells; the interaction is MAP2K5-independent and prevents MAPK7 from ubiquitination and proteasomal degradation. Interacts with STUB1/CHIP; the interaction is enhanced in the presence of IGF1 or MAP2K5 and promotes STUB1/CHIP E3 ligase activity. Mg(2+) serves as cofactor. Post-translationally, dually phosphorylated on Thr-219 and Tyr-221, which activates the enzyme.

It localises to the cytoplasm. Its subcellular location is the nucleus. It is found in the PML body. It carries out the reaction L-seryl-[protein] + ATP = O-phospho-L-seryl-[protein] + ADP + H(+). The enzyme catalyses L-threonyl-[protein] + ATP = O-phospho-L-threonyl-[protein] + ADP + H(+). Its activity is regulated as follows. Activated by tyrosine and threonine phosphorylation. Activated in response to hyperosmolarity, hydrogen peroxide, and epidermal growth factor (EGF). Functionally, plays a role in various cellular processes such as proliferation, differentiation and cell survival. The upstream activator of MAPK7 is the MAPK kinase MAP2K5. Upon activation, it translocates to the nucleus and phosphorylates various downstream targets including MEF2C. EGF activates MAPK7 through a Ras-independent and MAP2K5-dependent pathway. As part of the MAPK/ERK signaling pathway, acts as a negative regulator of apoptosis in cardiomyocytes via interaction with STUB1/CHIP and promotion of STUB1-mediated ubiquitination and degradation of ICER-type isoforms of CREM. May have a role in muscle cell differentiation. May be important for endothelial function and maintenance of blood vessel integrity. MAP2K5 and MAPK7 interact specifically with one another and not with MEK1/ERK1 or MEK2/ERK2 pathways. Phosphorylates SGK1 at Ser-78 and this is required for growth factor-induced cell cycle progression. Involved in the regulation of p53/TP53 by disrupting the PML-MDM2 interaction. The protein is Mitogen-activated protein kinase 7 (MAPK7) of Bos taurus (Bovine).